The sequence spans 304 residues: Oxygen-dependent coproporphyrinogen-III oxidase (304 aa).

Serine 94 is a substrate binding site. Residues histidine 98 and histidine 108 each coordinate a divalent metal cation. The Proton donor role is filled by histidine 108. 110–112 lines the substrate pocket; it reads NVR. A divalent metal cation contacts are provided by histidine 147 and histidine 177. The segment at 242–277 is important for dimerization; that stretch reads YVEFNLVWDRGTLFGLQSGGRTESVLMSMPPLARWQ. 260–262 is a substrate binding site; that stretch reads GGR.

This sequence belongs to the aerobic coproporphyrinogen-III oxidase family. As to quaternary structure, homodimer. A divalent metal cation is required as a cofactor.

The protein localises to the cytoplasm. The enzyme catalyses coproporphyrinogen III + O2 + 2 H(+) = protoporphyrinogen IX + 2 CO2 + 2 H2O. Its pathway is porphyrin-containing compound metabolism; protoporphyrin-IX biosynthesis; protoporphyrinogen-IX from coproporphyrinogen-III (O2 route): step 1/1. In terms of biological role, involved in the heme biosynthesis. Catalyzes the aerobic oxidative decarboxylation of propionate groups of rings A and B of coproporphyrinogen-III to yield the vinyl groups in protoporphyrinogen-IX. The protein is Oxygen-dependent coproporphyrinogen-III oxidase of Sodalis glossinidius (strain morsitans).